We begin with the raw amino-acid sequence, 239 residues long: Putative transcriptional regulator of 2-aminoethylphosphonate degradation operons (239 aa).

In terms of domain architecture, HTH gntR-type spans 8-76 (IPQYLLIKAQ…DRRGWFVTPE (69 aa)). The segment at residues 36–55 (ERELCAIFNTTRITIRESLA) is a DNA-binding region (H-T-H motif).

This is Putative transcriptional regulator of 2-aminoethylphosphonate degradation operons (phnR) from Salmonella paratyphi A (strain ATCC 9150 / SARB42).